The primary structure comprises 305 residues: Ribonuclease BN (305 aa).

Zn(2+)-binding residues include histidine 64, histidine 66, aspartate 68, histidine 69, histidine 141, aspartate 212, and histidine 270. Aspartate 68 (proton acceptor) is an active-site residue.

Belongs to the RNase Z family. RNase BN subfamily. Homodimer. Zn(2+) serves as cofactor.

Functionally, zinc phosphodiesterase, which has both exoribonuclease and endoribonuclease activities. The sequence is that of Ribonuclease BN from Escherichia coli O45:K1 (strain S88 / ExPEC).